A 319-amino-acid polypeptide reads, in one-letter code: Ribonuclease Z (319 aa).

Positions 62, 64, 66, 67, 145, 216, and 274 each coordinate Zn(2+). Aspartate 66 functions as the Proton acceptor in the catalytic mechanism.

This sequence belongs to the RNase Z family. As to quaternary structure, homodimer. The cofactor is Zn(2+).

The enzyme catalyses Endonucleolytic cleavage of RNA, removing extra 3' nucleotides from tRNA precursor, generating 3' termini of tRNAs. A 3'-hydroxy group is left at the tRNA terminus and a 5'-phosphoryl group is left at the trailer molecule.. Functionally, zinc phosphodiesterase, which displays some tRNA 3'-processing endonuclease activity. Probably involved in tRNA maturation, by removing a 3'-trailer from precursor tRNA. This Parasynechococcus marenigrum (strain WH8102) protein is Ribonuclease Z.